Reading from the N-terminus, the 177-residue chain is Large ribosomal subunit protein uL6 (177 aa).

This sequence belongs to the universal ribosomal protein uL6 family. Part of the 50S ribosomal subunit.

In terms of biological role, this protein binds to the 23S rRNA, and is important in its secondary structure. It is located near the subunit interface in the base of the L7/L12 stalk, and near the tRNA binding site of the peptidyltransferase center. This chain is Large ribosomal subunit protein uL6, found in Neisseria meningitidis serogroup B (strain ATCC BAA-335 / MC58).